Consider the following 211-residue polypeptide: Bcl-2 homologous antagonist/killer (211 aa).

Residues 1-28 (MASGQGPGPPRQECGEPALPSASEEQVA) form a disordered region. N-acetylalanine is present on Ala2. The short motif at 74–88 (VGRQLAIIGDDINRR) is the BH3 element. Residues 117–136 (SLFESGINWGRVVALLGFGY) carry the BH1 motif. 2 residues coordinate Zn(2+): Asp160 and His164. The BH2 signature appears at 169 to 184 (RWIAQRGGWVAALNLG). Residues 188–205 (ILNVLVVLGVVLLGQFVV) traverse the membrane as a helical segment.

Belongs to the Bcl-2 family. As to quaternary structure, homodimer. Formation of the homodimer is zinc-dependent. Forms heterodimers with BCL2 and BCL2L1 isoform Bcl-X(L). Forms heterooligomers with BAX. Interacts with BCL2A1. Interacts with RTL10/BOP. Interacts with VDAC1. Interacts with GIMAP3/IAN4 and GIMAP5/IAN5. In terms of assembly, (Microbial infection) Interacts with vaccinia virus protein F1. (Microbial infection) Interacts with myxoma virus protein M11L. As to quaternary structure, (Microbial infection) Interacts with Epstein-Barr virus protein BALF1. In terms of assembly, (Microbial infection) Interacts with adenovirus protein E1B 19K. Expressed in a wide variety of tissues, with highest levels in the heart and skeletal muscle.

Its subcellular location is the mitochondrion outer membrane. In terms of biological role, plays a role in the mitochondrial apoptotic process. Upon arrival of cell death signals, promotes mitochondrial outer membrane (MOM) permeabilization by oligomerizing to form pores within the MOM. This releases apoptogenic factors into the cytosol, including cytochrome c, promoting the activation of caspase 9 which in turn processes and activates the effector caspases. This is Bcl-2 homologous antagonist/killer (BAK1) from Homo sapiens (Human).